The following is an 835-amino-acid chain: Leucine--tRNA ligase (835 aa).

The short motif at 42–52 (PYPSGRIHMGH) is the 'HIGH' region element. The 'KMSKS' region motif lies at 612 to 616 (KMSKS). Lysine 615 provides a ligand contact to ATP.

Belongs to the class-I aminoacyl-tRNA synthetase family.

Its subcellular location is the cytoplasm. The catalysed reaction is tRNA(Leu) + L-leucine + ATP = L-leucyl-tRNA(Leu) + AMP + diphosphate. The polypeptide is Leucine--tRNA ligase (Rhizorhabdus wittichii (strain DSM 6014 / CCUG 31198 / JCM 15750 / NBRC 105917 / EY 4224 / RW1) (Sphingomonas wittichii)).